The primary structure comprises 341 residues: Methionine import ATP-binding protein MetN 1 (341 aa).

An ABC transporter domain is found at 2 to 241; it reads IKLNQIVKRY…PQHEVTKRFV (240 aa). ATP is bound at residue 38–45; it reads GFSGAGKS.

Belongs to the ABC transporter superfamily. Methionine importer (TC 3.A.1.24) family. In terms of assembly, the complex is composed of two ATP-binding proteins (MetN), two transmembrane proteins (MetI) and a solute-binding protein (MetQ).

It is found in the cell membrane. The enzyme catalyses L-methionine(out) + ATP + H2O = L-methionine(in) + ADP + phosphate + H(+). The catalysed reaction is D-methionine(out) + ATP + H2O = D-methionine(in) + ADP + phosphate + H(+). Its function is as follows. Part of the ABC transporter complex MetNIQ involved in methionine import. Responsible for energy coupling to the transport system. This is Methionine import ATP-binding protein MetN 1 from Staphylococcus epidermidis (strain ATCC 12228 / FDA PCI 1200).